The primary structure comprises 203 residues: Ribosome maturation factor RimP (203 aa).

The disordered stretch occupies residues 183–203; sequence FDDIETEGSAEGTTGSEEENK.

It belongs to the RimP family.

The protein resides in the cytoplasm. Required for maturation of 30S ribosomal subunits. The sequence is that of Ribosome maturation factor RimP from Ruegeria sp. (strain TM1040) (Silicibacter sp.).